A 765-amino-acid polypeptide reads, in one-letter code: Putative chloride channel-like protein CLC-g (765 aa).

The next 12 helical transmembrane spans lie at 67-87 (VFMKWLLCFCIGIIVSLIGFA), 116-136 (FVVFSVTNLILTLFASVITAF), 167-187 (LIIKIIGNISAVSASLLIGKA), 190-210 (MVHTGACVASILGQGGSKRYR), 232-252 (GAAAGIAASFRAPVGGVLFAL), 262-282 (ALLWRIFFSTAVVAIVLRALI), 315-335 (VLPVLLLGVVGGILGSLYNFL), 355-375 (ILLACAISIFTSCLLFGLPFL), 438-458 (FSVLVFFVTCFFLSIFSYGIV), 462-482 (GLFVPVIVTGASYGRFVGMLL), 494-514 (AVLGAASFLGGTMRMTVSTCV), and 515-535 (ILLELTNNLLLLPMMMVVLLI). The 73-residue stretch at 568–640 (MRQLLVGDVV…LLKKRVFMPS (73 aa)) folds into the CBS 1 domain. S646 carries the phosphoserine modification. In terms of domain architecture, CBS 2 spans 687–748 (FSNASPYTVV…PEHILGLHPS (62 aa)). A helical membrane pass occupies residues 715-735 (HLLVIPKTSNRPPVVGILTRH).

The protein belongs to the chloride channel (TC 2.A.49) family. As to quaternary structure, homodimer. Interacts with PP2A5.

The protein localises to the membrane. Putative voltage-gated chloride channel. The chain is Putative chloride channel-like protein CLC-g (CLC-G) from Arabidopsis thaliana (Mouse-ear cress).